Reading from the N-terminus, the 229-residue chain is Aquaporin Z (229 aa).

2 helical membrane passes run F8–V28 and I33–I53. Positions N62–A64 match the NPA 1 motif. A run of 3 helical transmembrane segments spans residues L81–I101, A131–T151, and G158–V178. Positions N184–A186 match the NPA 2 motif. A helical membrane pass occupies residues A199–L219.

This sequence belongs to the MIP/aquaporin (TC 1.A.8) family. In terms of assembly, homotetramer.

The protein localises to the cell inner membrane. It carries out the reaction H2O(in) = H2O(out). Functionally, channel that permits osmotically driven movement of water in both directions. It is involved in the osmoregulation and in the maintenance of cell turgor during volume expansion in rapidly growing cells. It mediates rapid entry or exit of water in response to abrupt changes in osmolarity. The chain is Aquaporin Z from Pseudomonas aeruginosa (strain ATCC 15692 / DSM 22644 / CIP 104116 / JCM 14847 / LMG 12228 / 1C / PRS 101 / PAO1).